Here is a 1846-residue protein sequence, read N- to C-terminus: Insulin-like receptor (1846 aa).

Residues Asn113, Asn180, and Asn364 are each glycosylated (N-linked (GlcNAc...) asparagine). Intrachain disulfides connect Cys371/Cys386, Cys393/Cys401, Cys397/Cys410, Cys413/Cys422, and Cys426/Cys438. Residue Asn453 is glycosylated (N-linked (GlcNAc...) asparagine). Disulfide bonds link Cys469/Cys483 and Cys486/Cys490. Asn518 is a glycosylation site (N-linked (GlcNAc...) asparagine). Cys615 and Cys646 are disulfide-bonded. N-linked (GlcNAc...) asparagine glycans are attached at residues Asn652, Asn671, and Asn696. Fibronectin type-III domains follow at residues 775 to 869 (TPDP…TMMG), 969 to 1067 (KPSS…LKRT), and 1077 to 1179 (LNET…TPGF). Residues 944–980 (EKAENLGKAPKTLGGKKPLIHISKKKPSSSSTTSTPA) form a disordered region. Over residues 961–970 (PLIHISKKKP) the composition is skewed to basic residues. At 970–1183 (PSSSSTTSTP…VMTPGFFTVE (214 aa)) the chain is on the extracellular side. The span at 971–980 (SSSSTTSTPA) shows a compositional bias: low complexity. Residues Asn1017, Asn1047, Asn1078, Asn1087, and Asn1093 are each glycosylated (N-linked (GlcNAc...) asparagine). A helical membrane pass occupies residues 1184-1204 (IILGMLLVFLILMSIAGCIIY). At 1205–1846 (YYIQVRYGKK…IEDNEHHPLV (642 aa)) the chain is on the cytoplasmic side. The Protein kinase domain maps to 1246-1528 (VVLGQQCGEG…LLAAEASPEF (283 aa)). Residues 1252-1260 (CGEGSFGKV) and Lys1282 each bind ATP. Asp1388 acts as the Proton acceptor in catalysis. Disordered stretches follow at residues 1718–1742 (ISSM…TNWS) and 1769–1826 (QQQQ…IFNG). The segment covering 1726–1742 (STGASSSSYGVPQTNWS) has biased composition (polar residues). Over residues 1808-1821 (YRNNGSPSRNGNSR) the composition is skewed to low complexity.

The protein belongs to the protein kinase superfamily. Tyr protein kinase family. Insulin receptor subfamily. In terms of assembly, tetramer of 2 alpha and 2 beta chains linked by disulfide bonds. The alpha chains contribute to the formation of the ligand-binding domain, while the beta chains carry the kinase domain. Interacts (via cytoplasmic domain) with shc-1 (PID domain). Interacts (via kinase domain) with daf-18 (via C-terminus). As to quaternary structure, interacts with casy-1; promoting axonal localization. Mg(2+) is required as a cofactor.

It localises to the membrane. The protein localises to the cell projection. It is found in the axon. The enzyme catalyses L-tyrosyl-[protein] + ATP = O-phospho-L-tyrosyl-[protein] + ADP + H(+). With respect to regulation, autophosphorylation activates the kinase activity. Interaction with shc-1 may inhibit its activity. In terms of biological role, insulin receptor-like tyrosine kinase which regulates metabolism, controls longevity and prevents developmental arrest at the dauer stage. Binding of INS family members may either stimulate, or antagonize, association of the receptor with downstream mediators such as pdk-1 and age-1. Required for germline progenitor proliferation during larval development. Plays a role in maintaining gonad integrity in a daf-16/FOXO-dependent manner. Required for the response to environmental stimuli such as light, food, pheromone, and temperature. Negatively regulates resistance to UV and oxidative stress. In a daf-16/FOXO-dependent manner, plays a role in regulating the response to white light. Role in immune function and pathogen resistance. Negatively regulates autophagy. Regulates daf-18/PTEN protein levels. Plays a role in controlling seam cell development during the larval stages. Required for taste avoidance learning in the cell body of ASER gustatory neurons. Its function is as follows. Required for taste avoidance learning in axons of ASER gustatory neurons. The polypeptide is Insulin-like receptor (Caenorhabditis elegans).